We begin with the raw amino-acid sequence, 557 residues long: Aerobic glycerol-3-phosphate dehydrogenase (557 aa).

An FAD-binding site is contributed by D21–E49.

It belongs to the FAD-dependent glycerol-3-phosphate dehydrogenase family. FAD serves as cofactor.

Its subcellular location is the cytoplasm. It carries out the reaction a quinone + sn-glycerol 3-phosphate = dihydroxyacetone phosphate + a quinol. It participates in polyol metabolism; glycerol degradation via glycerol kinase pathway; glycerone phosphate from sn-glycerol 3-phosphate (aerobic route): step 1/1. The protein is Aerobic glycerol-3-phosphate dehydrogenase (glpD) of Staphylococcus aureus (strain MRSA252).